Reading from the N-terminus, the 98-residue chain is MPPIFTNVILAFATAFLGTLIFRSHLMSSLLCLEGMMLSLFILSTLIILNMHLTVSFMMPILLLVFAACEAAIGLALLVMVSNTYGLDHIKNLNLLQC.

3 consecutive transmembrane segments (helical) span residues 2 to 22 (PPIFTNVILAFATAFLGTLIF), 29 to 49 (SLLCLEGMMLSLFILSTLIIL), and 61 to 81 (ILLLVFAACEAAIGLALLVMV).

This sequence belongs to the complex I subunit 4L family. As to quaternary structure, core subunit of respiratory chain NADH dehydrogenase (Complex I) which is composed of 45 different subunits.

The protein localises to the mitochondrion inner membrane. It carries out the reaction a ubiquinone + NADH + 5 H(+)(in) = a ubiquinol + NAD(+) + 4 H(+)(out). Functionally, core subunit of the mitochondrial membrane respiratory chain NADH dehydrogenase (Complex I) which catalyzes electron transfer from NADH through the respiratory chain, using ubiquinone as an electron acceptor. Part of the enzyme membrane arm which is embedded in the lipid bilayer and involved in proton translocation. In Avahi occidentalis (Western woolly lemur), this protein is NADH-ubiquinone oxidoreductase chain 4L (MT-ND4L).